Here is a 231-residue protein sequence, read N- to C-terminus: Phosphatidylserine decarboxylase proenzyme (231 aa).

The active-site Schiff-base intermediate with substrate; via pyruvic acid is the S188. S188 bears the Pyruvic acid (Ser); by autocatalysis mark.

It belongs to the phosphatidylserine decarboxylase family. PSD-A subfamily. As to quaternary structure, heterodimer of a large membrane-associated beta subunit and a small pyruvoyl-containing alpha subunit. Pyruvate is required as a cofactor. In terms of processing, is synthesized initially as an inactive proenzyme. Formation of the active enzyme involves a self-maturation process in which the active site pyruvoyl group is generated from an internal serine residue via an autocatalytic post-translational modification. Two non-identical subunits are generated from the proenzyme in this reaction, and the pyruvate is formed at the N-terminus of the alpha chain, which is derived from the carboxyl end of the proenzyme. The post-translation cleavage follows an unusual pathway, termed non-hydrolytic serinolysis, in which the side chain hydroxyl group of the serine supplies its oxygen atom to form the C-terminus of the beta chain, while the remainder of the serine residue undergoes an oxidative deamination to produce ammonia and the pyruvoyl prosthetic group on the alpha chain.

It localises to the cell membrane. It carries out the reaction a 1,2-diacyl-sn-glycero-3-phospho-L-serine + H(+) = a 1,2-diacyl-sn-glycero-3-phosphoethanolamine + CO2. It participates in phospholipid metabolism; phosphatidylethanolamine biosynthesis; phosphatidylethanolamine from CDP-diacylglycerol: step 2/2. Its function is as follows. Catalyzes the formation of phosphatidylethanolamine (PtdEtn) from phosphatidylserine (PtdSer). This Rickettsia prowazekii (strain Madrid E) protein is Phosphatidylserine decarboxylase proenzyme.